Reading from the N-terminus, the 913-residue chain is DNA repair endonuclease XPF (913 aa).

The segment at 1–454 is helicase-like; sequence MDRGISAVRK…EVWVNLRKGD (454 aa). Leucine-zipper regions lie at residues 233–254 and 270–298; these read LNAC…DLSL and LDPL…LQYL. Position 289 is an N6-acetyllysine (Lys289). Over residues 453–476 the composition is skewed to basic and acidic residues; it reads GDGPKRTMKSDKRPKDTKNKERAS. Disordered stretches follow at residues 453–525 and 638–677; these read GDGP…CGGE and VVPE…HNGT. Positions 483-488 match the Nuclear localization signal motif; that stretch reads KRKKRE. Residues 500-509 show a composition bias toward acidic residues; that stretch reads EPPEEGAAEE. At Ser518 the chain carries Phosphoserine. A compositionally biased stretch (basic and acidic residues) spans 638–649; that stretch reads VVPEEREGRDET. Residues 655–810 form a nuclease region; that stretch reads RGTVSTDAPA…PSPHATAELF (156 aa). Residues 680–760 form the ERCC4 domain; that stretch reads SIVVDMREFR…RPVLLIEFDA (81 aa). The tract at residues 834–902 is hhH2, dimerization with ERCC1; that stretch reads TLPESDKYNP…QLYDFLHTAY (69 aa).

This sequence belongs to the XPF family. As to quaternary structure, heterodimer composed of ERCC1 and ERCC4/XPF. Interacts with SLX4/BTBD12; this interaction is direct and links the ERCC1-ERCC4/XPF complex to SLX4, which may coordinate the action of the structure-specific endonuclease during DNA repair. It depends on Mg(2+) as a cofactor.

The protein localises to the nucleus. It localises to the chromosome. In terms of biological role, catalytic component of a structure-specific DNA repair endonuclease responsible for the 5-prime incision during DNA repair, and which is essential for nucleotide excision repair (NER) and interstrand cross-link (ICL) repair. In Cricetulus griseus (Chinese hamster), this protein is DNA repair endonuclease XPF.